The sequence spans 255 residues: 5-oxoprolinase subunit A (255 aa).

The protein belongs to the LamB/PxpA family. As to quaternary structure, forms a complex composed of PxpA, PxpB and PxpC.

The enzyme catalyses 5-oxo-L-proline + ATP + 2 H2O = L-glutamate + ADP + phosphate + H(+). Functionally, catalyzes the cleavage of 5-oxoproline to form L-glutamate coupled to the hydrolysis of ATP to ADP and inorganic phosphate. This chain is 5-oxoprolinase subunit A, found in Clostridium beijerinckii (strain ATCC 51743 / NCIMB 8052) (Clostridium acetobutylicum).